The primary structure comprises 408 residues: Arginine biosynthesis bifunctional protein ArgJ (408 aa).

Substrate-binding residues include threonine 158, lysine 184, threonine 195, glutamate 281, asparagine 403, and threonine 408. Residue threonine 195 is the Nucleophile of the active site.

This sequence belongs to the ArgJ family. Heterotetramer of two alpha and two beta chains.

The protein resides in the cytoplasm. It carries out the reaction N(2)-acetyl-L-ornithine + L-glutamate = N-acetyl-L-glutamate + L-ornithine. It catalyses the reaction L-glutamate + acetyl-CoA = N-acetyl-L-glutamate + CoA + H(+). Its pathway is amino-acid biosynthesis; L-arginine biosynthesis; L-ornithine and N-acetyl-L-glutamate from L-glutamate and N(2)-acetyl-L-ornithine (cyclic): step 1/1. The protein operates within amino-acid biosynthesis; L-arginine biosynthesis; N(2)-acetyl-L-ornithine from L-glutamate: step 1/4. Catalyzes two activities which are involved in the cyclic version of arginine biosynthesis: the synthesis of N-acetylglutamate from glutamate and acetyl-CoA as the acetyl donor, and of ornithine by transacetylation between N(2)-acetylornithine and glutamate. In Shouchella clausii (strain KSM-K16) (Alkalihalobacillus clausii), this protein is Arginine biosynthesis bifunctional protein ArgJ.